Consider the following 670-residue polypeptide: Amyloid beta A4 precursor protein-binding family B member 1-interacting protein (670 aa).

Position 55 is a phosphoserine (Ser55). The region spanning 179-266 (KKLVVKVHMD…KVLFLEKEER (88 aa)) is the Ras-associating domain. In terms of domain architecture, PH spans 313 to 422 (VPELEGALYL…WVMGIRIAKY (110 aa)). Positions 449–653 (VGTPMPAQPS…PGAPGNSEQD (205 aa)) are disordered. Polar residues predominate over residues 456–475 (QPSTVSSGLKTGTSQPNGQM). Phosphoserine is present on Ser532. A Phosphothreonine modification is found at Thr534. Ser537 carries the phosphoserine modification. Composition is skewed to pro residues over residues 553–567 (PHPP…PPPP), 576–599 (LPPP…PPPA), 606–615 (LPPPPPPPPC), and 625–634 (PLPPKKPLVP).

It belongs to the MRL family. In terms of assembly, interacts, through the N-terminal Pro-rich region, with the WW domain of APBB1. Interacts with RAP1A, PFN1, VASP and ENAH. Ubiquitously expressed with high expression in the hematopoietic system.

It is found in the cell membrane. Its subcellular location is the cell projection. The protein resides in the lamellipodium. It localises to the cell junction. The protein localises to the focal adhesion. It is found in the cytoplasm. Its subcellular location is the cytoskeleton. Appears to function in the signal transduction from Ras activation to actin cytoskeletal remodeling. Suppresses insulin-induced promoter activities through AP1 and SRE. Mediates Rap1-induced adhesion. The chain is Amyloid beta A4 precursor protein-binding family B member 1-interacting protein (Apbb1ip) from Mus musculus (Mouse).